The sequence spans 271 residues: Phosphonoacetaldehyde hydrolase (271 aa).

The active-site Nucleophile is Asp12. Positions 12 and 14 each coordinate Mg(2+). Lys54 serves as the catalytic Schiff-base intermediate with substrate. Residue Asp188 participates in Mg(2+) binding.

The protein belongs to the HAD-like hydrolase superfamily. PhnX family. Homodimer. The cofactor is Mg(2+).

The enzyme catalyses phosphonoacetaldehyde + H2O = acetaldehyde + phosphate + H(+). Functionally, involved in phosphonate degradation. The protein is Phosphonoacetaldehyde hydrolase of Vibrio parahaemolyticus serotype O3:K6 (strain RIMD 2210633).